The sequence spans 194 residues: Phosphoheptose isomerase (194 aa).

The 156-residue stretch at 31–186 folds into the SIS domain; that stretch reads ICQRFQAGNK…CEQVESRLFA (156 aa). Residue 46 to 48 participates in substrate binding; sequence NGG. The Zn(2+) site is built by His-55 and Glu-59. Residues Glu-59, 88 to 89, 114 to 116, Ser-119, and Gln-166 each bind substrate; these read ND and STS. The Zn(2+) site is built by Gln-166 and His-174.

This sequence belongs to the SIS family. GmhA subfamily. The cofactor is Zn(2+).

The protein localises to the cytoplasm. The enzyme catalyses 2 D-sedoheptulose 7-phosphate = D-glycero-alpha-D-manno-heptose 7-phosphate + D-glycero-beta-D-manno-heptose 7-phosphate. It participates in carbohydrate biosynthesis; D-glycero-D-manno-heptose 7-phosphate biosynthesis; D-glycero-alpha-D-manno-heptose 7-phosphate and D-glycero-beta-D-manno-heptose 7-phosphate from sedoheptulose 7-phosphate: step 1/1. Functionally, catalyzes the isomerization of sedoheptulose 7-phosphate in D-glycero-D-manno-heptose 7-phosphate. This Synechocystis sp. (strain ATCC 27184 / PCC 6803 / Kazusa) protein is Phosphoheptose isomerase.